Reading from the N-terminus, the 192-residue chain is Transmembrane protein 276 (192 aa).

The first 32 residues, 1–32 (MVSKPRNEWSTALSHLVLAGVSLHAAVSSVQS), serve as a signal peptide directing secretion. 4 helical membrane-spanning segments follow: residues 35–55 (GAAA…APEL), 63–83 (AGAW…FHWV), 92–112 (LLLG…PEGC), and 114–134 (VAGQ…AVFT).

The protein resides in the membrane. In Rattus norvegicus (Rat), this protein is Transmembrane protein 276.